The chain runs to 98 residues: Integration host factor subunit alpha (98 aa).

It belongs to the bacterial histone-like protein family. In terms of assembly, heterodimer of an alpha and a beta chain.

Its function is as follows. This protein is one of the two subunits of integration host factor, a specific DNA-binding protein that functions in genetic recombination as well as in transcriptional and translational control. The chain is Integration host factor subunit alpha from Acinetobacter baumannii (strain AB307-0294).